Consider the following 1801-residue polypeptide: U3 small nucleolar RNA-associated protein 10 (1801 aa).

A run of 2 helical transmembrane segments spans residues 102–122 and 136–156; these read LALV…EWLI and ILTF…AILP. The HEAT 1 repeat unit spans residues 581 to 619; the sequence is DVDVQALLPFMLIALADPSERVRSGAVDALANIGKVVDK. 2 helical membrane-spanning segments follow: residues 939–959 and 995–1015; these read IQSG…AIVN and ALLL…HSVM. HEAT repeat units lie at residues 1038-1076, 1110-1148, 1244-1282, 1288-1327, and 1756-1794; these read DQTI…AFEH, YSMD…DSLK, TLTT…QSPE, QTRM…KYGK, and LALL…VLGE.

This sequence belongs to the HEATR1/UTP10 family. In terms of assembly, component of the ribosomal small subunit (SSU) processome.

It localises to the nucleus. Its subcellular location is the nucleolus. It is found in the membrane. Its function is as follows. Involved in nucleolar processing of pre-18S ribosomal RNA. Involved in ribosome biosynthesis. The polypeptide is U3 small nucleolar RNA-associated protein 10 (Emericella nidulans (strain FGSC A4 / ATCC 38163 / CBS 112.46 / NRRL 194 / M139) (Aspergillus nidulans)).